A 304-amino-acid chain; its full sequence is UDP-N-acetylenolpyruvoylglucosamine reductase (304 aa).

The 165-residue stretch at 34–198 (IGGKADFLVW…LEVVFALRPG (165 aa)) folds into the FAD-binding PCMH-type domain. Arg177 is a catalytic residue. The active-site Proton donor is the Ser227. Glu297 is an active-site residue.

Belongs to the MurB family. Requires FAD as cofactor.

It is found in the cytoplasm. The enzyme catalyses UDP-N-acetyl-alpha-D-muramate + NADP(+) = UDP-N-acetyl-3-O-(1-carboxyvinyl)-alpha-D-glucosamine + NADPH + H(+). The protein operates within cell wall biogenesis; peptidoglycan biosynthesis. Its function is as follows. Cell wall formation. The chain is UDP-N-acetylenolpyruvoylglucosamine reductase from Geobacillus kaustophilus (strain HTA426).